The primary structure comprises 370 residues: UDP-3-O-acylglucosamine N-acyltransferase (370 aa).

H252 (proton acceptor) is an active-site residue. The interval 350 to 370 is disordered; that stretch reads AAGRQDGPAANAASSSAGDKA. A compositionally biased stretch (low complexity) spans 358-370; sequence AANAASSSAGDKA.

The protein belongs to the transferase hexapeptide repeat family. LpxD subfamily. In terms of assembly, homotrimer.

The catalysed reaction is a UDP-3-O-[(3R)-3-hydroxyacyl]-alpha-D-glucosamine + a (3R)-hydroxyacyl-[ACP] = a UDP-2-N,3-O-bis[(3R)-3-hydroxyacyl]-alpha-D-glucosamine + holo-[ACP] + H(+). Its pathway is bacterial outer membrane biogenesis; LPS lipid A biosynthesis. Its function is as follows. Catalyzes the N-acylation of UDP-3-O-acylglucosamine using 3-hydroxyacyl-ACP as the acyl donor. Is involved in the biosynthesis of lipid A, a phosphorylated glycolipid that anchors the lipopolysaccharide to the outer membrane of the cell. This is UDP-3-O-acylglucosamine N-acyltransferase from Paraburkholderia xenovorans (strain LB400).